The sequence spans 310 residues: tRNA uridine(34) hydroxylase (310 aa).

Positions 127–225 (KDKDTIVIDT…YLEDISKEES (99 aa)) constitute a Rhodanese domain. Catalysis depends on Cys185, which acts as the Cysteine persulfide intermediate.

The protein belongs to the TrhO family.

The catalysed reaction is uridine(34) in tRNA + AH2 + O2 = 5-hydroxyuridine(34) in tRNA + A + H2O. In terms of biological role, catalyzes oxygen-dependent 5-hydroxyuridine (ho5U) modification at position 34 in tRNAs. This Prochlorococcus marinus (strain MIT 9515) protein is tRNA uridine(34) hydroxylase.